The sequence spans 525 residues: Ribosomal protein S6 kinase beta-1 (525 aa).

Positions 28–32 match the TOS motif motif; it reads FDIDL. A compositionally biased stretch (acidic residues) spans 32–46; it reads LDQPEDAGSEDELEE. Residues 32–54 form a disordered region; the sequence is LDQPEDAGSEDELEEGGQLNESM. The Protein kinase domain maps to 91-352; sequence FELLRVLGKG…AGEVQAHPFF (262 aa). ATP contacts are provided by residues 97 to 105 and Lys-123; that span reads LGKGGYGKV. Asp-218 functions as the Proton acceptor in the catalytic mechanism. Thr-252 is subject to Phosphothreonine; by PDPK1. Positions 353–423 constitute an AGC-kinase C-terminal domain; it reads RHINWEELLA…VAPSVLESVK (71 aa). Residues 380-399 are disordered; it reads SQFDSKFTRQTPVDSPDDST. A compositionally biased stretch (polar residues) spans 381–399; that stretch reads QFDSKFTRQTPVDSPDDST. At Ser-394 the chain carries Phosphoserine. At Thr-412 the chain carries Phosphothreonine; by MTOR, NEK6 and NEK7. Residues 424-525 are autoinhibitory domain; it reads EKFSFEPKIR…KRPEHLRMNL (102 aa). 2 positions are modified to phosphoserine: Ser-434 and Ser-441. Phosphothreonine is present on Thr-444. Phosphoserine occurs at positions 447 and 452. At Lys-516 the chain carries N6-acetyllysine.

The protein belongs to the protein kinase superfamily. AGC Ser/Thr protein kinase family. S6 kinase subfamily. In terms of assembly, interacts with PPP1R9A/neurabin-1. Interacts with RPTOR. Interacts with IRS1. Interacts with EIF3B and EIF3C. Interacts with TRAF4. Interacts with POLDIP3. Interacts (via N-terminus) with IER5. In terms of processing, phosphorylation at Thr-412 is regulated by mTORC1. The phosphorylation at this site is maintained by an agonist-dependent autophosphorylation mechanism. Activated by phosphorylation at Thr-252 by PDPK1. Dephosphorylation by PPP1CC at Thr-412 in mitochondrion.

It is found in the cytoplasm. It localises to the synapse. The protein localises to the synaptosome. Its subcellular location is the mitochondrion outer membrane. The protein resides in the mitochondrion. The catalysed reaction is L-seryl-[protein] + ATP = O-phospho-L-seryl-[protein] + ADP + H(+). It carries out the reaction L-threonyl-[protein] + ATP = O-phospho-L-threonyl-[protein] + ADP + H(+). With respect to regulation, activation requires multiple phosphorylation events on serine/threonine residues. Activation appears to be first mediated by phosphorylation of multiple sites in the autoinhibitory domain, which facilitates phosphorylation at Thr-412, disrupting the autoinhibitory mechanism and allowing phosphorylation of Thr-252 by PDPK1. The active conformation of the kinase is believed to be stabilized by a mechanism involving three conserved phosphorylation sites located in the kinase domain activation loop (Thr-252) and in the AGC-kinase C-terminal domain (Ser-394 in the middle of the tail/linker region and Thr-412 within a hydrophobic motif at its end). Activated by mTORC1; isoform Alpha I and isoform Alpha II are sensitive to rapamycin, which inhibits activating phosphorylation at Thr-412. Activated by PDPK1. In terms of biological role, serine/threonine-protein kinase that acts downstream of mTOR signaling in response to growth factors and nutrients to promote cell proliferation, cell growth and cell cycle progression. Regulates protein synthesis through phosphorylation of EIF4B, RPS6 and EEF2K, and contributes to cell survival by repressing the pro-apoptotic function of BAD. Under conditions of nutrient depletion, the inactive form associates with the EIF3 translation initiation complex. Upon mitogenic stimulation, phosphorylation by the mechanistic target of rapamycin complex 1 (mTORC1) leads to dissociation from the EIF3 complex and activation. The active form then phosphorylates and activates several substrates in the pre-initiation complex, including the EIF2B complex and the cap-binding complex component EIF4B. Also controls translation initiation by phosphorylating a negative regulator of EIF4A, PDCD4, targeting it for ubiquitination and subsequent proteolysis. Promotes initiation of the pioneer round of protein synthesis by phosphorylating POLDIP3/SKAR. In response to IGF1, activates translation elongation by phosphorylating EEF2 kinase (EEF2K), which leads to its inhibition and thus activation of EEF2. Also plays a role in feedback regulation of mTORC2 by mTORC1 by phosphorylating MAPKAP1/SIN1, MTOR and RICTOR, resulting in the inhibition of mTORC2 and AKT1 signaling. Also involved in feedback regulation of mTORC1 and mTORC2 by phosphorylating DEPTOR. Mediates cell survival by phosphorylating the pro-apoptotic protein BAD and suppressing its pro-apoptotic function. Phosphorylates mitochondrial URI1 leading to dissociation of a URI1-PPP1CC complex. The free mitochondrial PPP1CC can then dephosphorylate RPS6KB1 at Thr-412, which is proposed to be a negative feedback mechanism for the RPS6KB1 anti-apoptotic function. Mediates TNF-alpha-induced insulin resistance by phosphorylating IRS1 at multiple serine residues, resulting in accelerated degradation of IRS1. In cells lacking functional TSC1-2 complex, constitutively phosphorylates and inhibits GSK3B. May be involved in cytoskeletal rearrangement through binding to neurabin. Phosphorylates and activates the pyrimidine biosynthesis enzyme CAD, downstream of MTOR. Following activation by mTORC1, phosphorylates EPRS and thereby plays a key role in fatty acid uptake by adipocytes and also most probably in interferon-gamma-induced translation inhibition. This is Ribosomal protein S6 kinase beta-1 (Rps6kb1) from Mus musculus (Mouse).